Reading from the N-terminus, the 231-residue chain is 5'-methylthioadenosine/S-adenosylhomocysteine nucleosidase (231 aa).

Glu12 acts as the Proton acceptor in catalysis. Substrate-binding positions include Gly78, Met153, and Met174–Glu175. Asp198 (proton donor) is an active-site residue.

It belongs to the PNP/UDP phosphorylase family. MtnN subfamily.

It catalyses the reaction S-adenosyl-L-homocysteine + H2O = S-(5-deoxy-D-ribos-5-yl)-L-homocysteine + adenine. The catalysed reaction is S-methyl-5'-thioadenosine + H2O = 5-(methylsulfanyl)-D-ribose + adenine. The enzyme catalyses 5'-deoxyadenosine + H2O = 5-deoxy-D-ribose + adenine. Its pathway is amino-acid biosynthesis; L-methionine biosynthesis via salvage pathway; S-methyl-5-thio-alpha-D-ribose 1-phosphate from S-methyl-5'-thioadenosine (hydrolase route): step 1/2. In terms of biological role, catalyzes the irreversible cleavage of the glycosidic bond in both 5'-methylthioadenosine (MTA) and S-adenosylhomocysteine (SAH/AdoHcy) to adenine and the corresponding thioribose, 5'-methylthioribose and S-ribosylhomocysteine, respectively. Also cleaves 5'-deoxyadenosine, a toxic by-product of radical S-adenosylmethionine (SAM) enzymes, into 5-deoxyribose and adenine. The protein is 5'-methylthioadenosine/S-adenosylhomocysteine nucleosidase of Bacillus licheniformis (strain ATCC 14580 / DSM 13 / JCM 2505 / CCUG 7422 / NBRC 12200 / NCIMB 9375 / NCTC 10341 / NRRL NRS-1264 / Gibson 46).